Consider the following 224-residue polypeptide: Urease accessory protein UreF (224 aa).

Belongs to the UreF family. UreD, UreF and UreG form a complex that acts as a GTP-hydrolysis-dependent molecular chaperone, activating the urease apoprotein by helping to assemble the nickel containing metallocenter of UreC. The UreE protein probably delivers the nickel.

It is found in the cytoplasm. Required for maturation of urease via the functional incorporation of the urease nickel metallocenter. The chain is Urease accessory protein UreF from Methylorubrum populi (strain ATCC BAA-705 / NCIMB 13946 / BJ001) (Methylobacterium populi).